We begin with the raw amino-acid sequence, 952 residues long: Substrate-adhesion molecule (952 aa).

The signal sequence occupies residues 1–25 (MKSQKIGSMILLIGILLAIFNFAYS). The Extracellular segment spans residues 26–527 (DDDIERFSIN…TWFFDTNVET (502 aa)). Residues asparagine 78, asparagine 182, asparagine 231, asparagine 243, and asparagine 412 are each glycosylated (N-linked (GlcNAc...) asparagine). An EGF-like domain is found at 438–471 (EIRRCKDSCNGYGTCNTANYTCVCDSAHMGETCN). 3 disulfides stabilise this stretch: cysteine 442-cysteine 452, cysteine 446-cysteine 459, and cysteine 461-cysteine 470. Asparagine 456 carries an N-linked (GlcNAc...) asparagine glycan. Residues 528–548 (GVIALACIFIAFVGILYIIDI) traverse the membrane as a helical segment. Residues 549-591 (GTTVPIDIKRAKDYAEENKSGQFPKATHEEASVLWWRDQRSHK) are Cytoplasmic-facing. The chain crosses the membrane as a helical span at residues 592 to 612 (AWTFMDQFQLISLVSHIGVVF). The Extracellular segment spans residues 613 to 678 (PSRFISFTEY…GDLYLLPNIL (66 aa)). Residues 679–699 (FWFGLLLGVFLVPLLLAYAII) form a helical membrane-spanning segment. Topologically, residues 700-722 (SFMESLIHWKEVVTNRLIHVLVR) are cytoplasmic. The helical transmembrane segment at 723–743 (ILTFGYIGVLIAASFAMVTPL) threads the bilayer. Over 744–752 (HDYRIIIPG) the chain is Extracellular. The helical transmembrane segment at 753–773 (AIIFVLYGIGLPIAIWFLLAV) threads the bilayer. Residues 774-801 (PEARLHNPTFKQRFGCLYVHYKPKTDHR) lie on the Cytoplasmic side of the membrane. The chain crosses the membrane as a helical span at residues 802-822 (FVVFMFIKRFIMAVIIGILSF). At 823-837 (KPMTNYPLTGTDLAV) the chain is on the extracellular side. Residues 838–858 (PIVQVVVIDIALIGYAVLLFI) traverse the membrane as a helical segment. Topologically, residues 859-868 (RKPYFDHYQL) are cytoplasmic. Residues 869–889 (WLEYLLTAINIVTVSLSLTHI) form a helical membrane-spanning segment. Topologically, residues 890–897 (KSPSAAGE) are extracellular. Residues 898-918 (LIACLIQALALVACIAAYVVA) traverse the membrane as a helical segment. The Cytoplasmic segment spans residues 919–952 (WLQMRSSFIKKVKKYLCCCCKSSKSSGEIDLSKK).

It localises to the cell membrane. In terms of biological role, involved in substrate adhesion, myosin-independent cytokinesis, organization of actin cytoskeleton, and phagocytosis. This Dictyostelium discoideum (Social amoeba) protein is Substrate-adhesion molecule (sadA).